The sequence spans 144 residues: Large ribosomal subunit protein uL16 (144 aa).

It belongs to the universal ribosomal protein uL16 family. Part of the 50S ribosomal subunit.

Its function is as follows. Binds 23S rRNA and is also seen to make contacts with the A and possibly P site tRNAs. This is Large ribosomal subunit protein uL16 from Bacillus subtilis (strain 168).